A 379-amino-acid polypeptide reads, in one-letter code: Stimulator of interferon genes protein (379 aa).

At 1–17 (MPHSSLHPSIPCPRGHG) the chain is on the cytoplasmic side. Residues 1 to 190 (MPHSSLHPSI…TYNQHYNNLL (190 aa)) form a mediates interaction with ZDHHC1 and ZDHHC11 region. A helical membrane pass occupies residues 18 to 34 (AQKAALVLLSACLVTLW). Residue Lys20 forms a Glycyl lysine isopeptide (Lys-Gly) (interchain with G-Cter in ubiquitin) linkage. Over 35–44 (GLGEPPEHTL) the chain is Lumenal. A helical membrane pass occupies residues 45 to 69 (RYLVLHLASLQLGLLLNGVCSLAEE). The Cytoplasmic portion of the chain corresponds to 70–91 (LRHIHSRYRGSYWRTVRACLGC). S-palmitoyl cysteine attachment occurs at residues Cys88 and Cys91. Residues 92–106 (PLRRGALLLLSIYFY) form a helical membrane-spanning segment. Residues 107 to 116 (YSLPNAVGPP) are Lumenal-facing. Residues 117-134 (FTWMLALLGLSQALNILL) traverse the membrane as a helical segment. Residues 135-379 (GLKGLAPAEI…KPLPLRTDFS (245 aa)) lie on the Cytoplasmic side of the membrane. Lys150 is covalently cross-linked (Glycyl lysine isopeptide (Lys-Gly) (interchain with G-Cter in ubiquitin)). A cyclic dinucleotide-binding domain (CBD) region spans residues 153–340 (FNVAHGLAWS…RHLRQEEKEE (188 aa)). Residues Ser162 and Tyr167 each contribute to the 2',3'-cGAMP site. Residues Ser162 and Tyr167 each contribute to the 3',3'-c-di-GMP site. Residue Tyr167 participates in 2',3'-cUAMP binding. At Thr229 the chain carries Phosphothreonine. Lys236 participates in a covalent cross-link: Glycyl lysine isopeptide (Lys-Gly) (interchain with G-Cter in ubiquitin). 2',3'-cGAMP is bound at residue Arg238. Arg238 is a binding site for 2',3'-cUAMP. Residues 238-241 (RVYS) and Thr263 each bind 3',3'-c-di-GMP. Ser241 is modified (phosphoserine). Thr263 is a binding site for 2',3'-cGAMP. Residue Thr263 coordinates 2',3'-cUAMP. Lys338 participates in a covalent cross-link: Glycyl lysine isopeptide (Lys-Gly) (interchain with G-Cter in SUMO). The interval 340–379 (EVTVGSLKTSAVPSTSTMSQEPELLISGMEKPLPLRTDFS) is C-terminal tail (CTT). A disordered region spans residues 341–370 (VTVGSLKTSAVPSTSTMSQEPELLISGMEK). A compositionally biased stretch (polar residues) spans 345–359 (SLKTSAVPSTSTMSQ). Thr354 is subject to Phosphothreonine. Ser355 is subject to Phosphoserine; by MAP3K7. Thr356 carries the post-translational modification Phosphothreonine. Residues Ser358 and Ser366 each carry the phosphoserine; by TBK1 modification. The short motif at 363–366 (LLIS) is the pLxIS motif element.

This sequence belongs to the STING family. As to quaternary structure, homodimer; forms a homodimer in absence of cyclic nucleotide (c-di-GMP or cGAMP); 'Lys-63'-linked ubiquitination at Lys-150 is required for homodimerization. Homotetramer; in presence of cyclic nucleotide (c-di-GMP or cGAMP), forms tetramers and higher-order oligomers through side-by-side packing. Interacts (when phosphorylated) with IRF3; following activation and phosphorylation on the pLxIS motif by TBK1, recruits IRF3. Interacts with RIGI, MAVS and SSR2. Interacts with RNF5 and TRIM56. Interacts with TBK1; when homodimer, leading to subsequent production of IFN-beta. Interacts with IFIT1 and IFIT2. Interacts with TRIM29; this interaction induces STING1 ubiquitination and subsequent degradation. Associates with the MHC-II complex. Interacts with STEEP1; interaction takes place upon cGAMP-activation and STING1 phosphorylation by MAP3K7/TAK1 and promotes STING1 translocation to COPII vesicles. Interacts with SEC24A, SEC24B, and SEC24C; promoting translocation to COPII vesicles. Interacts (when ubiquitinated) with SQSTM1; leading to relocalization to autophagosomes. Interacts with SURF4. Interacts with HNRNPA2B1. Interacts with ZDHHC1; ZDHHC1 constitutively interacts with STING1 and in presence of DNA viruses activates it by promoting its cGAMP-induced oligomerization and the recruitment of downstream signaling components. Interacts with ZDHHC11; in presence of DNA viruses promotes the recruitment of IRF3 to STING1. Interacts with TOMM70. Interacts with isoform IFI16-beta of IFI16. Interacts with TAB1; promoting recruitment of TAB1 to the endoplasmic reticulum membrane and subsequent activation of MAP3K7/TAK1. Interacts (via transmembrane domain) with TMEM203. Interacts with DDX41. Interacts with TMEM120A (via C-terminal domain); regulates the trafficking of STING1 from the ER to the ER-Golgi intermediate compartment to elicit antiviral effects. In terms of assembly, (Microbial infection) Interacts with human papillomavirus (HPV) protein E7. (Microbial infection) Interacts with adenovirus early E1A protein. As to quaternary structure, (Microbial infection) Interacts with herpes simplex virus 1 protein ICP34.5; this interaction inhibits the intracellular DNA sensing pathway. In terms of assembly, (Microbial infection) Interacts with Chikungunya virus non-structural protein 1; this interaction results in inhibition of cGAS-STING signaling and increased levels of palmitoylated nsP1 and protein stabilization. (Microbial infection) Interacts with human cytomegalovirus proteins UL94, UL42 and UL138; these interactions result in the inhibition of cGAS-STING signaling. As to quaternary structure, (Microbial infection) Interacts with varivella virus protein 39; this interaction results in the inhibition of cGAS-STING signaling. Phosphorylation by TBK1 leads to activation and production of IFN-beta. Following cyclic nucleotide (c-di-GMP or cGAMP)-binding, activation and translocation from the endoplasmic reticulum, STING1 is phosphorylated by TBK1 at Ser-366 in the pLxIS motif. The phosphorylated pLxIS motif constitutes an IRF3-binding motif, leading to recruitment of the transcription factor IRF3 to induce type-I interferons and other cytokines. The phosphorylated pLxIS motif facilitates SENP2 recruitment during late phase of viral infection. Phosphorylated on tyrosine residues upon MHC-II aggregation. Dephosphorylation by PPP6C leads to inactivation and decreased production of IFN-beta. Phosphorylation at Ser-358 is also required to activate IRF3. Phosphorylation at Ser-355 by MAP3K7/TAK1 facilitates its interaction with STEEP1, promoting STING1 translocation to COPII vesicles. Post-translationally, ubiquitinated. Ubiquitinated via 'Lys-63'-linked ubiquitin chains in response to double-stranded DNA treatment, leading to relocalization to autophagosomes and subsequent degradation; this process is dependent on SQSTM1. 'Lys-63'-linked ubiquitination mediated by TRIM56 at Lys-150 promotes homodimerization and recruitment of the antiviral kinase TBK1 and subsequent production of IFN-beta. 'Lys-48'-linked polyubiquitination at Lys-150 occurring after viral infection is mediated by RNF5 and leads to proteasomal degradation. 'Lys-11'-linked polyubiquitination at Lys-150 by RNF26 leads to stabilize STING1: it protects STING1 from RNF5-mediated 'Lys-48'-linked polyubiquitination. 'Lys-33'-linked and 'Lys-48'-linked deubiquitinated by USP20; leading to its stabilization and promotion of innate antiviral response. 'Lys-48'-linked deubiquitinated by USP44; leading to its stabilization and promotion of innate antiviral response. Deubiquitinated by USP13; leading to inhibition of innate antiviral response. 'Lys-63'-linked deubiquitinated by USP49; leading to inhibition of the subsequent recruitment of TBK1 to the signaling complex. 'Lys-63'-linked ubiquitination mediated by RNF39 promotes the activation of the cGAS-STING pathway. MARCHF5-mediated ubiquitination prevents the oxidation-induced polymer formation. In terms of processing, (Microbial infection) Deubiquitinated by Epstein-Barr virus BPLF1 on both 'Lys-48' and 'Lys-63'-linked ubiquitin chains; leading to inhibition of cGAS-STING signaling. Sumoylated at Lys-338 by TRIM38 during the early phase of viral infection, promoting its stability by preventing its relocalization to autophagosomes and subsequent degradation. Desumoylated by SENP2 during the late phase of viral infection. Post-translationally, palmitoylation takes place in the Golgi apparatus and creates a platform for the recruitment of TBK1. In terms of tissue distribution, ubiquitously expressed. Expressed in skin endothelial cells, alveolar type 2 pneumocytes, bronchial epithelium and alveolar macrophages.

Its subcellular location is the endoplasmic reticulum membrane. The protein resides in the cytoplasm. It is found in the perinuclear region. The protein localises to the endoplasmic reticulum-Golgi intermediate compartment membrane. It localises to the golgi apparatus membrane. Its subcellular location is the cytoplasmic vesicle. The protein resides in the autophagosome membrane. It is found in the mitochondrion outer membrane. The protein localises to the cell membrane. The catalysed reaction is H(+)(in) = H(+)(out). Activated upon binding to the hydrolysis-resistant 2'3'-cG(s)A(s)MP, an analog of cGAMP, in which phosphodiester linkages are replaced by phosphothioate linkages. Specifically inhibited by small-molecule H-151 (N-(4-ethylphenyl)-N'-1H-indol-3-yl-urea), which covalently binds Cys-91 and prevents palmitoylation and subsequent activation of STING1. In contrast to mouse protein, not activated by anticancer molecule 5,6-dimethylxanthenone 4-acetic acid (DMXAA). Inhibited by compound 18 ([(3S,4S)-2-(4-tert-butyl-3-chlorophenyl)-3-(2,3-dihydro-1,4-benzodioxin-6-yl)-7-fluoro-1-oxo-1,2,3,4-tetrahydroisoquinolin-4-yl]acetate), a competitive inhibitor with slow dissociation kinetics and good oral bioavailability. Homooligomerization and ability to promote the production of type I interferons is activated by C53, a small benzothiazinone-like compound that binds to the transmembrane regions. in the area of the putative pore. In contrast, compound C53, directly inhibits the proton channel activity and facilitate MAP1LC3B/LC3B lipidation and autophagosome formation. Its function is as follows. Facilitator of innate immune signaling that acts as a sensor of cytosolic DNA from bacteria and viruses and promotes the production of type I interferon (IFN-alpha and IFN-beta). Innate immune response is triggered in response to non-CpG double-stranded DNA from viruses and bacteria delivered to the cytoplasm. Acts by binding cyclic dinucleotides: recognizes and binds cyclic di-GMP (c-di-GMP), a second messenger produced by bacteria, cyclic UMP-AMP (2',3'-cUAMP), and cyclic GMP-AMP (cGAMP), a messenger produced by CGAS in response to DNA virus in the cytosol. Upon binding to c-di-GMP, cUAMP or cGAMP, STING1 oligomerizes, translocates from the endoplasmic reticulum and is phosphorylated by TBK1 on the pLxIS motif, leading to recruitment and subsequent activation of the transcription factor IRF3 to induce expression of type I interferon and exert a potent anti-viral state. Exhibits 2',3' phosphodiester linkage-specific ligand recognition: can bind both 2'-3' linked cGAMP (2'-3'-cGAMP) and 3'-3' linked cGAMP but is preferentially activated by 2'-3' linked cGAMP. The preference for 2'-3'-cGAMP, compared to other linkage isomers is probably due to the ligand itself, whichs adopts an organized free-ligand conformation that resembles the STING1-bound conformation and pays low energy costs in changing into the active conformation. In addition to promote the production of type I interferons, plays a direct role in autophagy. Following cGAMP-binding, STING1 buds from the endoplasmic reticulum into COPII vesicles, which then form the endoplasmic reticulum-Golgi intermediate compartment (ERGIC). The ERGIC serves as the membrane source for WIPI2 recruitment and LC3 lipidation, leading to formation of autophagosomes that target cytosolic DNA or DNA viruses for degradation by the lysosome. Promotes autophagy by acting as a proton channel that directs proton efflux from the Golgi to facilitate MAP1LC3B/LC3B lipidation. The autophagy- and interferon-inducing activities can be uncoupled and autophagy induction is independent of TBK1 phosphorylation. Autophagy is also triggered upon infection by bacteria: following c-di-GMP-binding, which is produced by live Gram-positive bacteria, promotes reticulophagy. May be involved in translocon function, the translocon possibly being able to influence the induction of type I interferons. May be involved in transduction of apoptotic signals via its association with the major histocompatibility complex class II (MHC-II). (Microbial infection) Antiviral activity is antagonized by oncoproteins, such as papillomavirus (HPV) protein E7 and adenovirus early E1A protein. Such oncoproteins prevent the ability to sense cytosolic DNA. The polypeptide is Stimulator of interferon genes protein (Homo sapiens (Human)).